Here is a 295-residue protein sequence, read N- to C-terminus: Phosphoribosylaminoimidazole-succinocarboxamide synthase (295 aa).

Belongs to the SAICAR synthetase family.

The enzyme catalyses 5-amino-1-(5-phospho-D-ribosyl)imidazole-4-carboxylate + L-aspartate + ATP = (2S)-2-[5-amino-1-(5-phospho-beta-D-ribosyl)imidazole-4-carboxamido]succinate + ADP + phosphate + 2 H(+). It functions in the pathway purine metabolism; IMP biosynthesis via de novo pathway; 5-amino-1-(5-phospho-D-ribosyl)imidazole-4-carboxamide from 5-amino-1-(5-phospho-D-ribosyl)imidazole-4-carboxylate: step 1/2. This chain is Phosphoribosylaminoimidazole-succinocarboxamide synthase, found in Halorhodospira halophila (strain DSM 244 / SL1) (Ectothiorhodospira halophila (strain DSM 244 / SL1)).